Here is a 125-residue protein sequence, read N- to C-terminus: Small ribosomal subunit protein bS6 (125 aa).

Residues 100 to 125 form a disordered region; it reads SPMVKAREERKPLTEVENNDFEDAEE. The span at 104–113 shows a compositional bias: basic and acidic residues; sequence KAREERKPLT. Residues 116–125 show a composition bias toward acidic residues; the sequence is ENNDFEDAEE.

The protein belongs to the bacterial ribosomal protein bS6 family.

Its function is as follows. Binds together with bS18 to 16S ribosomal RNA. This is Small ribosomal subunit protein bS6 from Histophilus somni (strain 129Pt) (Haemophilus somnus).